We begin with the raw amino-acid sequence, 321 residues long: Basic leucine zipper 34 (321 aa).

The segment at 97-189 (TDDDNLHSNP…SGNRILDPKR (93 aa)) is disordered. Composition is skewed to low complexity over residues 110–133 (NNKNNNVGPTGSSSNTSTPSNSFN), 145–155 (NMNNNINNNYN), and 172–182 (SNNNSGDSSGN). The 53-residue stretch at 186 to 238 (DPKRVKRILANRQSAQRSRVRKLQYISELERSVTSLQAEVSVLSPRVAFLDHQ) folds into the bZIP domain. Residues 188-207 (KRVKRILANRQSAQRSRVRK) are basic motif. Residues 214–235 (LERSVTSLQAEVSVLSPRVAFL) are leucine-zipper.

As to quaternary structure, forms heterodimers with BZIP18, BZIP43 and VIP1/BZIP51. Expressed in vascular tissues of leaves, stems and siliques, anthers, filaments, tapetum, mature pollen grains, pistil vascular tissues and papillar cells, and funiculi.

The protein resides in the nucleus. Transcriptional activator involved in the sporophytic control of cell wall patterning and gametophytic control of pollen development. May play a role in the control of metabolic pathways regulating cellular transport and lipid metabolism. The polypeptide is Basic leucine zipper 34 (Arabidopsis thaliana (Mouse-ear cress)).